Here is a 244-residue protein sequence, read N- to C-terminus: HTH-type transcriptional repressor PhnF (244 aa).

The 67-residue stretch at 8–74 (RILKHQVVRA…RGRTTVVARP (67 aa)) folds into the HTH gntR-type domain. The H-T-H motif DNA-binding region spans 35–54 (EREIAEQFEVARETVRQALR).

The protein localises to the cytoplasm. In terms of biological role, represses the phnDCE operon, involved in the uptake of phosphate, under conditions of phosphate availability in the cell. The chain is HTH-type transcriptional repressor PhnF (phnF) from Mycolicibacterium smegmatis (strain ATCC 700084 / mc(2)155) (Mycobacterium smegmatis).